A 159-amino-acid chain; its full sequence is Ribosomal RNA large subunit methyltransferase H (159 aa).

Residues Leu-76, Gly-107, and 126–131 (LSKLTM) contribute to the S-adenosyl-L-methionine site.

Belongs to the RNA methyltransferase RlmH family. Homodimer.

It localises to the cytoplasm. It catalyses the reaction pseudouridine(1915) in 23S rRNA + S-adenosyl-L-methionine = N(3)-methylpseudouridine(1915) in 23S rRNA + S-adenosyl-L-homocysteine + H(+). In terms of biological role, specifically methylates the pseudouridine at position 1915 (m3Psi1915) in 23S rRNA. The protein is Ribosomal RNA large subunit methyltransferase H of Acinetobacter baumannii (strain SDF).